We begin with the raw amino-acid sequence, 185 residues long: Ribosome-recycling factor (185 aa).

It belongs to the RRF family.

It localises to the cytoplasm. Functionally, responsible for the release of ribosomes from messenger RNA at the termination of protein biosynthesis. May increase the efficiency of translation by recycling ribosomes from one round of translation to another. The polypeptide is Ribosome-recycling factor (Geobacillus kaustophilus (strain HTA426)).